Here is a 366-residue protein sequence, read N- to C-terminus: Probable methyltransferase-like protein 24 (366 aa).

Residues methionine 1–leucine 29 form the signal peptide. The disordered stretch occupies residues alanine 36 to tryptophan 110. Over residues serine 44–glycine 63 the composition is skewed to pro residues. Over residues threonine 91–arginine 100 the composition is skewed to low complexity.

The protein belongs to the methyltransferase superfamily.

The protein resides in the secreted. In terms of biological role, probable methyltransferase. The protein is Probable methyltransferase-like protein 24 (METTL24) of Homo sapiens (Human).